Here is a 160-residue protein sequence, read N- to C-terminus: MTVMKEKGRKVIATNRRARHNYTILDTYEAGIVLVGTEVKSLREGKASLVDAFATVDNGEVWLRGLHIPEFSHGTWTNHSPRRVRKLLLHKREIERLVGKSREGNQTLVPLSMYFSDGKVKVELALARGKQDYDKRQDLARRTAEREVTRELGRRVKGMR.

This sequence belongs to the SmpB family.

The protein localises to the cytoplasm. In terms of biological role, required for rescue of stalled ribosomes mediated by trans-translation. Binds to transfer-messenger RNA (tmRNA), required for stable association of tmRNA with ribosomes. tmRNA and SmpB together mimic tRNA shape, replacing the anticodon stem-loop with SmpB. tmRNA is encoded by the ssrA gene; the 2 termini fold to resemble tRNA(Ala) and it encodes a 'tag peptide', a short internal open reading frame. During trans-translation Ala-aminoacylated tmRNA acts like a tRNA, entering the A-site of stalled ribosomes, displacing the stalled mRNA. The ribosome then switches to translate the ORF on the tmRNA; the nascent peptide is terminated with the 'tag peptide' encoded by the tmRNA and targeted for degradation. The ribosome is freed to recommence translation, which seems to be the essential function of trans-translation. This Nocardia farcinica (strain IFM 10152) protein is SsrA-binding protein.